A 302-amino-acid polypeptide reads, in one-letter code: Aurora/IPL1-related protein kinase 2 (302 aa).

The span at 1–17 (MENKPQILQTKSKNTPN) shows a compositional bias: polar residues. Residues 1 to 23 (MENKPQILQTKSKNTPNKGGKLS) form a disordered region. The 251-residue stretch at 27–277 (FEIGRPLGKG…LQEVKDHYWV (251 aa)) folds into the Protein kinase domain. Residues 33 to 41 (LGKGKFGSV) and Lys56 each bind ATP. Asp150 serves as the catalytic Proton acceptor.

This sequence belongs to the protein kinase superfamily. Ser/Thr protein kinase family. As to quaternary structure, interacts with zen-4 and icp-1. Part of a complex containing at least air-2; icp-1; csc-1 and bir-1. Interacts with tlk-1 and bmk-1.

Its subcellular location is the cytoplasm. It localises to the cytoskeleton. It is found in the chromosome. The protein localises to the midbody. It catalyses the reaction L-seryl-[protein] + ATP = O-phospho-L-seryl-[protein] + ADP + H(+). The enzyme catalyses L-threonyl-[protein] + ATP = O-phospho-L-threonyl-[protein] + ADP + H(+). In terms of biological role, serine/threonine-protein kinase which mediates both meiotic and mitotic chromosome segregation. Required for histone H3 'Ser-10' phosphorylation. Phosphorylates tlk-1 and zen-4. The sequence is that of Aurora/IPL1-related protein kinase 2 (air-2) from Caenorhabditis briggsae.